Reading from the N-terminus, the 388-residue chain is Pentatricopeptide repeat-containing protein 2, mitochondrial (388 aa).

The stretch at 166–200 (TSFNILMDMLFIKGKYKSALQVLIEMKNQDVKFTK) is one PPR repeat. Residue Ser-382 is modified to Phosphoserine.

Belongs to the PTCD2 family.

It is found in the mitochondrion. Its function is as follows. Involved in mitochondrial RNA maturation and mitochondrial respiratory chain function. In Homo sapiens (Human), this protein is Pentatricopeptide repeat-containing protein 2, mitochondrial (PTCD2).